The sequence spans 388 residues: MHNANHPHGNGHPAEKKGMGAHSGAMNMPRTLEDGSPACRLIAWEVTRSCNLACKHCRAEAHTEPYPGELSTQEAKALIDTFPEVGNPIIIFTGGDPMMRADLYELIRYATGLGLRCVLSPNGTLITGQNAVQIREAGVQRCSISIDGPSAELHDEFRGVPGAFEQSMRGIEFLKQAGVEFQINTTVTRDNLPYFKDIFKLCENLGAAAWHIFLLVPTGRAAQLGAQVITAEEYEEVLNWFYDFRKTTSMHLKATCAPHYYRIMRQRAKEEGLPVTPDNFGMDAMTRGCLGGIGFCFISHTGQVQPCGYLELDCGNVRDTRFPEIWRKSEYFRQFRTPEEYDGKCGHCEYHNVCGGCRARGFTMSGSHMAEEPLCTYQPRKKPAADRK.

Residues 1-12 show a composition bias toward low complexity; it reads MHNANHPHGNGH. A disordered region spans residues 1–29; it reads MHNANHPHGNGHPAEKKGMGAHSGAMNMP. A Radical SAM core domain is found at 34–257; that stretch reads DGSPACRLIA…TSMHLKATCA (224 aa). Residues Cys50, Cys54, and Cys57 each coordinate [4Fe-4S] cluster.

It belongs to the radical SAM superfamily. Requires [4Fe-4S] cluster as cofactor.

The enzyme catalyses Fe-coproporphyrin III + 2 S-adenosyl-L-methionine = heme b + 2 5'-deoxyadenosine + 2 L-methionine + 2 CO2. Its pathway is porphyrin-containing compound metabolism; protoheme biosynthesis. Its function is as follows. Involved in siroheme-dependent heme b biosynthesis. Catalyzes the conversion of Fe-coproporphyrin III into heme by the oxidative decarboxylation of two propionate side chains. The chain is AdoMet-dependent heme synthase from Oleidesulfovibrio alaskensis (strain ATCC BAA-1058 / DSM 17464 / G20) (Desulfovibrio alaskensis).